Here is a 1365-residue protein sequence, read N- to C-terminus: Polyprotein ABA-1 (1365 aa).

Belongs to the NPA family. In terms of processing, nematode polyprotein allergens (NPAs) are synthesized as large polypeptides that are subsequently proteolytically cleaved to active polypeptide units. In terms of tissue distribution, pseudocoelomic fluid.

Its function is as follows. Has high binding affinity for fatty acids and retinoids. The protein is Polyprotein ABA-1 (ABA-1) of Ascaris suum (Pig roundworm).